The primary structure comprises 135 residues: Retinol-binding protein 1 (135 aa).

An important for interaction with STRA6 region spans residues 22 to 32; the sequence is RALDVNVALRK. All-trans-retinol contacts are provided by Lys41, Met63, and Gln109.

It belongs to the calycin superfamily. Fatty-acid binding protein (FABP) family. As to quaternary structure, interacts (only as retinol-free apoprotein) with STRA6.

Its subcellular location is the cytoplasm. The protein resides in the lipid droplet. In terms of biological role, cytoplasmic retinol-binding protein. Accepts retinol from the transport protein STRA6, and thereby contributes to retinol uptake, storage and retinoid homeostasis. The chain is Retinol-binding protein 1 (Rbp1) from Mus musculus (Mouse).